Reading from the N-terminus, the 191-residue chain is Ribosome hibernation promotion factor (191 aa).

A disordered region spans residues 100–123 (KQRQEGRPEPLPGPAEAEVNAQGS).

It belongs to the HPF/YfiA ribosome-associated protein family. Long HPF subfamily. In terms of assembly, interacts with 100S ribosomes.

It is found in the cytoplasm. Functionally, required for dimerization of active 70S ribosomes into 100S ribosomes in stationary phase; 100S ribosomes are translationally inactive and sometimes present during exponential growth. The chain is Ribosome hibernation promotion factor from Deinococcus radiodurans (strain ATCC 13939 / DSM 20539 / JCM 16871 / CCUG 27074 / LMG 4051 / NBRC 15346 / NCIMB 9279 / VKM B-1422 / R1).